We begin with the raw amino-acid sequence, 197 residues long: Phosphoheptose isomerase (197 aa).

The region spanning 36–197 is the SIS domain; sequence MVQCLVSEGK…IDQQLFGSTE (162 aa). 51-53 contacts substrate; the sequence is NGG. Positions 60 and 64 each coordinate Zn(2+). Substrate contacts are provided by residues glutamate 64, 93 to 94, 119 to 121, serine 124, and glutamine 174; these read ND and STS. Positions 174 and 182 each coordinate Zn(2+).

This sequence belongs to the SIS family. GmhA subfamily. Homotetramer. Zn(2+) serves as cofactor.

Its subcellular location is the cytoplasm. The catalysed reaction is 2 D-sedoheptulose 7-phosphate = D-glycero-alpha-D-manno-heptose 7-phosphate + D-glycero-beta-D-manno-heptose 7-phosphate. Its pathway is carbohydrate biosynthesis; D-glycero-D-manno-heptose 7-phosphate biosynthesis; D-glycero-alpha-D-manno-heptose 7-phosphate and D-glycero-beta-D-manno-heptose 7-phosphate from sedoheptulose 7-phosphate: step 1/1. Functionally, catalyzes the isomerization of sedoheptulose 7-phosphate in D-glycero-D-manno-heptose 7-phosphate. This Chromohalobacter salexigens (strain ATCC BAA-138 / DSM 3043 / CIP 106854 / NCIMB 13768 / 1H11) protein is Phosphoheptose isomerase.